Here is a 267-residue protein sequence, read N- to C-terminus: Glucosamine-6-phosphate deaminase (267 aa).

Asp72 serves as the catalytic Proton acceptor; for enolization step. Asp141 serves as the catalytic For ring-opening step. His143 (proton acceptor; for ring-opening step) is an active-site residue. Residue Glu148 is the For ring-opening step of the active site.

This sequence belongs to the glucosamine/galactosamine-6-phosphate isomerase family. NagB subfamily. In terms of assembly, homohexamer.

It carries out the reaction alpha-D-glucosamine 6-phosphate + H2O = beta-D-fructose 6-phosphate + NH4(+). It functions in the pathway amino-sugar metabolism; N-acetylneuraminate degradation; D-fructose 6-phosphate from N-acetylneuraminate: step 5/5. With respect to regulation, allosterically activated by N-acetylglucosamine 6-phosphate (GlcNAc6P). Catalyzes the reversible isomerization-deamination of glucosamine 6-phosphate (GlcN6P) to form fructose 6-phosphate (Fru6P) and ammonium ion. This Pasteurella multocida (strain Pm70) protein is Glucosamine-6-phosphate deaminase.